Consider the following 374-residue polypeptide: Cathepsin W (374 aa).

The signal sequence occupies residues 1 to 21 (MAITVYLSCLLVLSMAGLAQG). Positions 22–127 (IKSSLRSQDP…EVGSEEWGES (106 aa)) are excised as a propeptide. 2 disulfide bridges follow: Cys-150/Cys-191 and Cys-184/Cys-226. The active site involves Cys-153. An N-linked (GlcNAc...) asparagine glycan is attached at Asn-205. Active-site residues include His-291 and Asn-329. Asn-347 carries N-linked (GlcNAc...) asparagine glycosylation.

It belongs to the peptidase C1 family.

It is found in the endoplasmic reticulum. May have a specific function in the mechanism or regulation of T-cell cytolytic activity. In Felis catus (Cat), this protein is Cathepsin W (CTSW).